The sequence spans 311 residues: Malate dehydrogenase (311 aa).

NAD(+)-binding positions include 7 to 13 (GAAGGIG) and D34. Residues R81 and R87 each coordinate substrate. Residues N94 and 117–119 (ITN) contribute to the NAD(+) site. The substrate site is built by N119 and R153. The active-site Proton acceptor is the H177. M227 lines the NAD(+) pocket.

This sequence belongs to the LDH/MDH superfamily. MDH type 1 family. In terms of assembly, homodimer.

The enzyme catalyses (S)-malate + NAD(+) = oxaloacetate + NADH + H(+). Functionally, catalyzes the reversible oxidation of malate to oxaloacetate. The sequence is that of Malate dehydrogenase from Shewanella baltica (strain OS223).